We begin with the raw amino-acid sequence, 390 residues long: Sterol 24-C-methyltransferase (390 aa).

The segment covering 1-12 (MSKQQHPSSKTQ) has biased composition (polar residues). The tract at residues 1 to 21 (MSKQQHPSSKTQITRRRDTAD) is disordered.

Belongs to the class I-like SAM-binding methyltransferase superfamily. Erg6/SMT family.

The catalysed reaction is zymosterol + S-adenosyl-L-methionine = fecosterol + S-adenosyl-L-homocysteine + H(+). Its pathway is steroid metabolism; ergosterol biosynthesis; ergosterol from zymosterol: step 1/5. In terms of biological role, catalyzes the methyl transfer from S-adenosyl-methionine to the C-24 of zymosterol to form fecosterol. The sequence is that of Sterol 24-C-methyltransferase (ERG6) from Pyricularia oryzae (strain 70-15 / ATCC MYA-4617 / FGSC 8958) (Rice blast fungus).